Consider the following 345-residue polypeptide: S-adenosylmethionine:tRNA ribosyltransferase-isomerase (345 aa).

The protein belongs to the QueA family. As to quaternary structure, monomer.

The protein localises to the cytoplasm. The enzyme catalyses 7-aminomethyl-7-carbaguanosine(34) in tRNA + S-adenosyl-L-methionine = epoxyqueuosine(34) in tRNA + adenine + L-methionine + 2 H(+). It functions in the pathway tRNA modification; tRNA-queuosine biosynthesis. In terms of biological role, transfers and isomerizes the ribose moiety from AdoMet to the 7-aminomethyl group of 7-deazaguanine (preQ1-tRNA) to give epoxyqueuosine (oQ-tRNA). The protein is S-adenosylmethionine:tRNA ribosyltransferase-isomerase of Shewanella oneidensis (strain ATCC 700550 / JCM 31522 / CIP 106686 / LMG 19005 / NCIMB 14063 / MR-1).